The following is a 201-amino-acid chain: FMN-dependent NADH:quinone oxidoreductase (201 aa).

FMN is bound by residues Ser-10, 16-18 (SQS), 96-99 (MYNF), and 140-143 (SRGG).

This sequence belongs to the azoreductase type 1 family. In terms of assembly, homodimer. FMN serves as cofactor.

It catalyses the reaction 2 a quinone + NADH + H(+) = 2 a 1,4-benzosemiquinone + NAD(+). The enzyme catalyses N,N-dimethyl-1,4-phenylenediamine + anthranilate + 2 NAD(+) = 2-(4-dimethylaminophenyl)diazenylbenzoate + 2 NADH + 2 H(+). Quinone reductase that provides resistance to thiol-specific stress caused by electrophilic quinones. Its function is as follows. Also exhibits azoreductase activity. Catalyzes the reductive cleavage of the azo bond in aromatic azo compounds to the corresponding amines. The protein is FMN-dependent NADH:quinone oxidoreductase of Yersinia pseudotuberculosis serotype O:1b (strain IP 31758).